We begin with the raw amino-acid sequence, 162 residues long: uncharacterized protein (162 aa).

The next 4 membrane-spanning stretches (helical) occupy residues 10–30 (ILSF…MLIL), 50–70 (IVEL…ALYN), 96–116 (IAQY…IILL), and 125–145 (FTAI…LFIF).

The protein resides in the cell membrane. This is an uncharacterized protein from Methanocaldococcus jannaschii (strain ATCC 43067 / DSM 2661 / JAL-1 / JCM 10045 / NBRC 100440) (Methanococcus jannaschii).